We begin with the raw amino-acid sequence, 706 residues long: DNA ligase (706 aa).

The disordered stretch occupies residues M1–A20. Residues D50–D54, S99–L100, and E128 contribute to the NAD(+) site. K130 acts as the N6-AMP-lysine intermediate in catalysis. NAD(+)-binding residues include R151, E188, K304, and K328. 4 residues coordinate Zn(2+): C422, C425, C440, and C446. In terms of domain architecture, BRCT spans E604–P694.

The protein belongs to the NAD-dependent DNA ligase family. LigA subfamily. Mg(2+) serves as cofactor. The cofactor is Mn(2+).

The catalysed reaction is NAD(+) + (deoxyribonucleotide)n-3'-hydroxyl + 5'-phospho-(deoxyribonucleotide)m = (deoxyribonucleotide)n+m + AMP + beta-nicotinamide D-nucleotide.. In terms of biological role, DNA ligase that catalyzes the formation of phosphodiester linkages between 5'-phosphoryl and 3'-hydroxyl groups in double-stranded DNA using NAD as a coenzyme and as the energy source for the reaction. It is essential for DNA replication and repair of damaged DNA. This chain is DNA ligase, found in Frankia casuarinae (strain DSM 45818 / CECT 9043 / HFP020203 / CcI3).